The chain runs to 581 residues: Jasmonoyl--L-amino acid synthetase GH3.5 (581 aa).

Ser92 lines the ATP pocket. Ser95 contacts jasmonate. ATP is bound by residues Thr115, Asn161, and 324-329; that span reads GASEGW. 159 to 163 provides a ligand contact to an L-alpha-amino acid; the sequence is TTNLY. Jasmonate is bound by residues 321–324 and Ser326; that span reads ADYG. An L-alpha-amino acid is bound at residue 534–538; sequence EILDH. ATP is bound at residue Lys561.

The protein belongs to the IAA-amido conjugating enzyme family. As to expression, expressed in green shoots, roots and flowers.

The catalysed reaction is a jasmonate + an L-alpha-amino acid + ATP = a jasmonyl-L-amino acid + AMP + diphosphate + H(+). Its function is as follows. Catalyzes the synthesis of jasmonate-amino acid conjugates by adenylation. Catalyzes the conjugation of jasmonate (JA) to Ile when expressed in a heterologous system (E.coli). Catalyzes in vitro the conjugation of jasmonate (JA) to Ile, Phe, Cys, Leu, Met, Ala, Val and Trp. Involved in the production of JA-Ile in response to infection by the rice blast fungus Magnaporthe oryzae. Required for the accumulation of the flavonoid phytoalexin sakuranetin in response to infection by the rice blast fungus. Involved in herbivory-induced JA-Ile accumulation. Involved in the production of JA-Ile in response to wounding. Required for modulation of light and JA signaling in photomorphogenesis. Required for normal seed development. Required for optimal flower opening and closing and anther dehiscence. May catalyze the synthesis of indole-3-acetic acid (IAA)-amino acid conjugates, providing a mechanism for the plant to cope with the presence of excess auxin. The protein is Jasmonoyl--L-amino acid synthetase GH3.5 of Oryza sativa subsp. japonica (Rice).